Here is an 88-residue protein sequence, read N- to C-terminus: Small ribosomal subunit protein bS20 (88 aa).

The disordered stretch occupies residues 1–27 (MANIKSQIKRNKTNEKARLRNKAVKSS).

The protein belongs to the bacterial ribosomal protein bS20 family.

Its function is as follows. Binds directly to 16S ribosomal RNA. This Streptomyces griseus subsp. griseus (strain JCM 4626 / CBS 651.72 / NBRC 13350 / KCC S-0626 / ISP 5235) protein is Small ribosomal subunit protein bS20.